The sequence spans 593 residues: ATPase family AAA domain-containing protein 3-B (593 aa).

Disordered stretches follow at residues 1-64 (MSWL…LDQS), 109-129 (EEKRKTLNEETKQHQARAQYQ), and 145-164 (QLQNEENLRRQEESVQKQEA). Residues 1 to 242 (MSWLFGLNRG…FRTFISDWDK (242 aa)) are Mitochondrial intermembrane-facing. The segment covering 12 to 27 (PEPPGVPGFPEPPSPP) has biased composition (pro residues). Composition is skewed to basic and acidic residues over residues 33–44 (GGDKNRPKDKWS), 53–64 (RAAKAARELDQS), 109–121 (EEKRKTLNEETKQ), and 150–164 (ENLRRQEESVQKQEA). The stretch at 51-215 (LERAAKAARE…QIRLKAAEHR (165 aa)) forms a coiled coil. Residues 243–260 (VTATVAGLTLLAVGVYTA) traverse the membrane as a helical segment. Over 261–593 (KNGTGVAGRY…LQPLLEGTPV (333 aa)) the chain is Mitochondrial matrix. 348 to 355 (GPPGTGKT) contacts ATP. The span at 570–580 (AEGKESTKEIG) shows a compositional bias: basic and acidic residues. Residues 570 to 593 (AEGKESTKEIGKNPLQPLLEGTPV) are disordered.

Belongs to the AAA ATPase family. As to quaternary structure, can form homooligomers. Homodimer formation at the N-terminus may be regulated by ATP and is required for the interaction with the inner surface of the mitochondrial outer membrane and correct mitochondrial homeostasis.

It is found in the mitochondrion inner membrane. The protein localises to the mitochondrion matrix. Its subcellular location is the mitochondrion nucleoid. The catalysed reaction is ATP + H2O = ADP + phosphate + H(+). Functionally, essential for mitochondrial network organization, mitochondrial metabolism and cell growth at organism and cellular level. May play an important role in mitochondrial protein synthesis. May also participate in mitochondrial DNA replication. May bind to mitochondrial DNA D-loops and contribute to nucleoid stability. Required for enhanced channeling of cholesterol for hormone-dependent steroidogenesis. Involved in mitochondrial-mediated antiviral innate immunity. Required to protect mitochondria from the PERK-mediated unfolded protein response: specifically inhibits the activity of EIF2AK3/PERK at mitochondria-endoplasmic reticulum contact sites, thereby providing a safe haven for mitochondrial protein translation during endoplasmic reticulum stress. Ability to inhibit EIF2AK3/PERK is independent of its ATPase activity. Also involved in the mitochondrial DNA damage response by promoting signaling between damaged genomes and the mitochondrial membrane, leading to activation of the integrated stress response (ISR). This is ATPase family AAA domain-containing protein 3-B (atad3-b) from Xenopus laevis (African clawed frog).